The chain runs to 158 residues: Mitotic-spindle organizing protein 2B (158 aa).

Ser34 bears the Phosphoserine mark. Positions 84 to 158 are disordered; sequence RLASEPQDPA…PGKSPTRGST (75 aa). Over residues 111-122 the composition is skewed to low complexity; that stretch reads GSAALGGALALA. Positions 128-140 are enriched in polar residues; sequence EGSSQRMPRQPSA. Ser152 bears the Phosphoserine mark.

It belongs to the MOZART2 family. In terms of assembly, associates with the gamma-tubulin ring complex (gTuRC) consisting of TUBGCP2, TUBGCP3, TUBGCP4, TUBGCP5 and TUBGCP6 and gamma-tubulin TUBG1 or TUBG2; within the complex, interacts with TUBGCP2; the interaction plays a role in gTuRC activation. Interacts with TUBG1.

It is found in the cytoplasm. Its subcellular location is the cytoskeleton. The protein resides in the microtubule organizing center. The protein localises to the centrosome. It localises to the spindle. Its function is as follows. Required for the recruitment and the assembly of the gamma-tubulin ring complex (gTuRC) at the centrosome. The gTuRC regulates the minus-end nucleation of alpha-beta tubulin heterodimers that grow into microtubule protafilaments, a critical step in centrosome duplication and spindle formation. This Homo sapiens (Human) protein is Mitotic-spindle organizing protein 2B (MZT2B).